Reading from the N-terminus, the 396-residue chain is Inositol polyphosphate multikinase (396 aa).

Positions 1–13 (MAAEPPALRLRPP) are enriched in low complexity. The interval 1–22 (MAAEPPALRLRPPGSTGDSPPV) is disordered. Residue Ala2 is modified to N-acetylalanine. Ser19 is subject to Phosphoserine. ATP is bound at residue Lys58. Arg65 is a substrate binding site. Residues 114 to 116 (EDV) and Asp127 contribute to the ATP site. Substrate-binding positions include Lys129, 143–150 (KIQQQVSK), and Gln179. The Nuclear localization signal signature appears at 300–310 (RHRKLYAKKHQ). Asp365 is an ATP binding site.

The protein belongs to the inositol phosphokinase (IPK) family. Mg(2+) is required as a cofactor.

The protein localises to the nucleus. The enzyme catalyses 1D-myo-inositol 1,4,5-trisphosphate + 2 ATP = 1D-myo-inositol 1,3,4,5,6-pentakisphosphate + 2 ADP + 2 H(+). It catalyses the reaction 1D-myo-inositol 1,3,4,6-tetrakisphosphate + ATP = 1D-myo-inositol 1,3,4,5,6-pentakisphosphate + ADP + H(+). It carries out the reaction 1-octadecanoyl-2-(5Z,8Z,11Z,14Z)-eicosatetraenoyl-sn-glycero-3-phospho-1D-myo-inositol 4,5-bisphosphate + ATP = 1-octadecanoyl-2-(5Z,8Z,11Z,14Z-eicosatetraenoyl)-sn-glycero-3-phospho-(1D-myo-inositol 3,4,5-triphosphate) + ADP + H(+). The catalysed reaction is a 1,2-diacyl-sn-glycero-3-phospho-(1D-myo-inositol-4,5-bisphosphate) + ATP = a 1,2-diacyl-sn-glycero-3-phospho-(1D-myo-inositol-3,4,5-trisphosphate) + ADP + H(+). The enzyme catalyses 1D-myo-inositol 1,4,5,6-tetrakisphosphate + ATP = 1D-myo-inositol 1,3,4,5,6-pentakisphosphate + ADP + H(+). Its pathway is phospholipid metabolism; phosphatidylinositol metabolism. Inositol phosphate kinase with a broad substrate specificity. Phosphorylates inositol 1,4,5-trisphosphate (Ins(1,4,5)P3) first to inositol 1,3,4,5-tetrakisphosphate and then to inositol 1,3,4,5,6-pentakisphosphate (Ins(1,3,4,5,6)P5). Phosphorylates inositol 1,3,4,6-tetrakisphosphate (Ins(1,3,4,6)P4). Phosphorylates inositol 1,4,5,6-tetrakisphosphate (Ins(1,4,5,6)P4). Phosphorylates glycero-3-phospho-1D-myo-inositol 4,5-bisphosphate to glycero-3-phospho-1D-myo-inositol 3,4,5-trisphosphate. Plays an important role in MLKL-mediated necroptosis via its role in the biosynthesis of inositol pentakisphosphate (InsP5) and inositol hexakisphosphate (InsP6). Binding of these highly phosphorylated inositol phosphates to MLKL mediates the release of an N-terminal auto-inhibitory region, leading to activation of the kinase. Essential for activated phospho-MLKL to oligomerize and localize to the cell membrane during necroptosis. Required for normal embryonic development, probably via its role in the biosynthesis of inositol 1,3,4,5,6-pentakisphosphate (Ins(1,3,4,5,6)P5) and inositol hexakisphosphate (InsP6). This is Inositol polyphosphate multikinase (Ipmk) from Mus musculus (Mouse).